A 237-amino-acid polypeptide reads, in one-letter code: Carbohydrate deacetylase (237 aa).

Mg(2+) is bound by residues H59 and H125.

This sequence belongs to the YdjC deacetylase family. Mg(2+) serves as cofactor.

Its function is as follows. Probably catalyzes the deacetylation of acetylated carbohydrates an important step in the degradation of oligosaccharides. The sequence is that of Carbohydrate deacetylase from Halalkalibacterium halodurans (strain ATCC BAA-125 / DSM 18197 / FERM 7344 / JCM 9153 / C-125) (Bacillus halodurans).